The primary structure comprises 650 residues: Protein ANTI-SILENCING 1 (650 aa).

Residues D38 to I169 form the BAH domain. Disordered stretches follow at residues N202–R223, A229–K248, K257–D359, and V425–N448. 2 stretches are compositionally biased toward basic and acidic residues: residues T259 to G270 and N277 to K287. Polar residues predominate over residues S302–S315. Basic and acidic residues-rich tracts occupy residues L348 to L358 and R438 to N448. The 84-residue stretch at T486–I569 folds into the RRM domain.

As to quaternary structure, component of the ASI1-AIPP1-EDM2 (AAE) RNA regulatory complex composed of at least AIPP1/EDM3, ASI1 and EDM2 and may contain CPL2, AIPP2 and AIPP3/BDT1. Binds directly to AIPP1/EDM3 and AIPP2.

Its function is as follows. Collaboratively with AIPP1/EDM3 and EDM2, the AAE complex regulates alternative RNA processing (e.g. alternative splicing) and epigenetic silencing (e.g. H3K9me2) of intronic heterochromatin-containing genes as well as genic heterochromatin-containing genes by promoting distal 3' polyadenylation; may associate with intronic heterochromatin and bind gene transcripts to modulate polyadenylation. Required to prevent promoter DNA hypermethylation and transcriptional silencing of some transgenes. Plays a similar role to that of the histone H3K9 demethylase JMJ25/IBM1 in preventing CHG methylation in the bodies of numerous genes. RNA-binding protein that ensures the proper expression of JMJ25/IBM1 full-length transcript by associating with an intronic heterochromatic repeat element of JMJ25/IBM1. Also modulates transposable elements (TE) expression. Contributes to a unique mechanism to deal with the collateral effect of silencing intronic repeat elements. This is Protein ANTI-SILENCING 1 from Arabidopsis thaliana (Mouse-ear cress).